The chain runs to 189 residues: Thermostable direct hemolysin 2 (189 aa).

The signal sequence occupies residues 1-24 (MKYRYFAKKSFLFISMLAAFKTFA). Cysteines 175 and 185 form a disulfide.

This sequence belongs to the TDH hemolysin family. As to quaternary structure, homodimer.

Its function is as follows. Bacterial hemolysins are exotoxins that attack blood cell membranes and cause cell rupture by mechanisms not clearly defined. The chain is Thermostable direct hemolysin 2 (tdh2) from Vibrio parahaemolyticus serotype O3:K6 (strain RIMD 2210633).